Consider the following 299-residue polypeptide: ATP phosphoribosyltransferase (299 aa).

Belongs to the ATP phosphoribosyltransferase family. Long subfamily. As to quaternary structure, equilibrium between an active dimeric form, an inactive hexameric form and higher aggregates. Interconversion between the various forms is largely reversible and is influenced by the natural substrates and inhibitors of the enzyme. Mg(2+) serves as cofactor.

It localises to the cytoplasm. It carries out the reaction 1-(5-phospho-beta-D-ribosyl)-ATP + diphosphate = 5-phospho-alpha-D-ribose 1-diphosphate + ATP. It functions in the pathway amino-acid biosynthesis; L-histidine biosynthesis; L-histidine from 5-phospho-alpha-D-ribose 1-diphosphate: step 1/9. With respect to regulation, feedback inhibited by histidine. Functionally, catalyzes the condensation of ATP and 5-phosphoribose 1-diphosphate to form N'-(5'-phosphoribosyl)-ATP (PR-ATP). Has a crucial role in the pathway because the rate of histidine biosynthesis seems to be controlled primarily by regulation of HisG enzymatic activity. This Escherichia coli O157:H7 protein is ATP phosphoribosyltransferase.